The primary structure comprises 104 residues: Naphthalene 1,2-dioxygenase system, ferredoxin component (104 aa).

The Rieske domain occupies 6–101; sequence IDAVALYEIP…VKIEGQRVMI (96 aa). [2Fe-2S] cluster is bound by residues C45, H47, C64, and H67.

This sequence belongs to the bacterial ring-hydroxylating dioxygenase ferredoxin component family. As to quaternary structure, the naphthalene dioxygenase (NDO) multicomponent enzyme system is composed of an electron transfer component and a dioxygenase component (iron sulfur protein (ISP)). The electron transfer component is composed of a ferredoxin reductase (NdoR) and a ferredoxin (NdoA), and the dioxygenase component is formed of a heterohexamer (trimer of heterodimers) of three large alpha subunits (NdoB) and three small beta subunits (NdoC). [2Fe-2S] cluster is required as a cofactor.

It participates in aromatic compound metabolism; naphthalene degradation. Its function is as follows. Component of the naphthalene dioxygenase (NDO) multicomponent enzyme system which catalyzes the incorporation of both atoms of molecular oxygen into naphthalene to form cis-(1R,2S)-dihydroxy-1,2-dihydronaphthalene. Functions as an intermediate electron transfer protein via a specific interaction with iron sulfur protein components (ISP) (NdoB and NdoC). This is Naphthalene 1,2-dioxygenase system, ferredoxin component from Pseudomonas aeruginosa.